Here is a 358-residue protein sequence, read N- to C-terminus: 4-hydroxybenzoate polyprenyltransferase, mitochondrial (358 aa).

Residues 1–20 (MIIKPIASPARYFLRTPSWS) constitute a mitochondrion transit peptide. Helical transmembrane passes span 76–96 (TGTY…AYAY), 107–127 (LALF…INDL), 154–174 (AISL…QLNP), 202–222 (VVLG…LAGE), 229–249 (VVAP…TIYA), 275–295 (VLCG…IMNG), and 336–356 (NTGY…SFIY).

This sequence belongs to the UbiA prenyltransferase family. Mg(2+) serves as cofactor.

Its subcellular location is the mitochondrion. The protein resides in the mitochondrion inner membrane. It carries out the reaction an all-trans-polyprenyl diphosphate + 4-hydroxybenzoate = a 4-hydroxy-3-(all-trans-polyprenyl)benzoate + diphosphate. It functions in the pathway cofactor biosynthesis; ubiquinone biosynthesis. Catalyzes the prenylation of para-hydroxybenzoate (PHB) with an all-trans polyprenyl group. Mediates the second step in the final reaction sequence of coenzyme Q (CoQ) biosynthesis, which is the condensation of the polyisoprenoid side chain with PHB, generating the first membrane-bound Q intermediate. The protein is 4-hydroxybenzoate polyprenyltransferase, mitochondrial of Schizosaccharomyces pombe (strain 972 / ATCC 24843) (Fission yeast).